Reading from the N-terminus, the 544-residue chain is Light-independent protochlorophyllide reductase subunit B (544 aa).

Position 36 (D36) interacts with [4Fe-4S] cluster. D286 (proton donor) is an active-site residue. 421-422 provides a ligand contact to substrate; the sequence is GM.

It belongs to the ChlB/BchB/BchZ family. In terms of assembly, protochlorophyllide reductase is composed of three subunits; BchL, BchN and BchB. Forms a heterotetramer of two BchB and two BchN subunits. It depends on [4Fe-4S] cluster as a cofactor.

The catalysed reaction is chlorophyllide a + oxidized 2[4Fe-4S]-[ferredoxin] + 2 ADP + 2 phosphate = protochlorophyllide a + reduced 2[4Fe-4S]-[ferredoxin] + 2 ATP + 2 H2O. Its pathway is porphyrin-containing compound metabolism; bacteriochlorophyll biosynthesis (light-independent). Its function is as follows. Component of the dark-operative protochlorophyllide reductase (DPOR) that uses Mg-ATP and reduced ferredoxin to reduce ring D of protochlorophyllide (Pchlide) to form chlorophyllide a (Chlide). This reaction is light-independent. The NB-protein (BchN-BchB) is the catalytic component of the complex. This Chloroflexus aggregans (strain MD-66 / DSM 9485) protein is Light-independent protochlorophyllide reductase subunit B.